The following is a 164-amino-acid chain: Transcriptional regulator MraZ (164 aa).

2 consecutive SpoVT-AbrB domains span residues 7–60 (HFTN…EIDE) and 83–126 (SEIL…EPGR). The interval 141–164 (LRKQLSSRPVAPDAQPPRPHGARE) is disordered. A compositionally biased stretch (pro residues) spans 154-164 (AQPPRPHGARE).

The protein belongs to the MraZ family. In terms of assembly, forms oligomers.

The protein localises to the cytoplasm. It localises to the nucleoid. This is Transcriptional regulator MraZ from Beijerinckia indica subsp. indica (strain ATCC 9039 / DSM 1715 / NCIMB 8712).